Here is a 160-residue protein sequence, read N- to C-terminus: Nucleotide-binding protein VV1_2655 (160 aa).

It belongs to the YajQ family.

Its function is as follows. Nucleotide-binding protein. The protein is Nucleotide-binding protein VV1_2655 of Vibrio vulnificus (strain CMCP6).